A 670-amino-acid chain; its full sequence is DNA-binding transcriptional activator HyfR (670 aa).

Positions 169–311 constitute a GAF domain; sequence DLDDLIADVA…HIADRIAIAV (143 aa). The Cys-rich segment, might bind a metal cluster signature appears at 207 to 221; sequence CSDLSASHCACLPRC. The 230-residue stretch at 347 to 576 folds into the Sigma-54 factor interaction domain; the sequence is IIYQSQAMED…LENVIERAVL (230 aa). ATP-binding positions include 375–382 and 438–447; these read GETGTGKE and ADGGTLFLDE. The segment at residues 641–660 is a DNA-binding region (H-T-H motif); sequence PRGAATRLGMKRTTLLSRMQ.

Its function is as follows. A transcriptional activator of its own operon; when overexpressed operon expression is strongly enhanced by low pH (under pH 6.0), strongly inhibited by O(2) but only weakly stimulated by fumarate. Expression in situ is very weak. The sequence is that of DNA-binding transcriptional activator HyfR from Escherichia coli (strain K12).